The primary structure comprises 89 residues: UPF0335 protein Nwi_0989 (89 aa).

The protein belongs to the UPF0335 family.

This is UPF0335 protein Nwi_0989 from Nitrobacter winogradskyi (strain ATCC 25391 / DSM 10237 / CIP 104748 / NCIMB 11846 / Nb-255).